A 415-amino-acid polypeptide reads, in one-letter code: Branched-chain-amino-acid aminotransferase, cytosolic (415 aa).

Lys-244 is subject to N6-(pyridoxal phosphate)lysine.

The protein belongs to the class-IV pyridoxal-phosphate-dependent aminotransferase family. Requires pyridoxal 5'-phosphate as cofactor.

It localises to the cytoplasm. It carries out the reaction L-leucine + 2-oxoglutarate = 4-methyl-2-oxopentanoate + L-glutamate. The catalysed reaction is L-isoleucine + 2-oxoglutarate = (S)-3-methyl-2-oxopentanoate + L-glutamate. The enzyme catalyses L-valine + 2-oxoglutarate = 3-methyl-2-oxobutanoate + L-glutamate. Functionally, catalyzes the first reaction in the catabolism of the essential branched chain amino acids leucine, isoleucine, and valine. This is Branched-chain-amino-acid aminotransferase, cytosolic (bcat-1) from Caenorhabditis elegans.